The following is a 104-amino-acid chain: ATP-dependent Clp protease adapter protein ClpS (104 aa).

The protein belongs to the ClpS family. In terms of assembly, binds to the N-terminal domain of the chaperone ClpA.

Its function is as follows. Involved in the modulation of the specificity of the ClpAP-mediated ATP-dependent protein degradation. This Bordetella bronchiseptica (strain ATCC BAA-588 / NCTC 13252 / RB50) (Alcaligenes bronchisepticus) protein is ATP-dependent Clp protease adapter protein ClpS.